Here is a 387-residue protein sequence, read N- to C-terminus: GDP-mannose transporter (387 aa).

The span at 1-25 shows a compositional bias: basic and acidic residues; that stretch reads MADTKKNDNYAIDMDKLDAESDRFR. Residues 1 to 42 lie on the Cytoplasmic side of the membrane; the sequence is MADTKKNDNYAIDMDKLDAESDRFRPPPQPQPRHSSSSHSQS. The disordered stretch occupies residues 1–45; it reads MADTKKNDNYAIDMDKLDAESDRFRPPPQPQPRHSSSSHSQSISN. The span at 32 to 45 shows a compositional bias: low complexity; sequence PRHSSSSHSQSISN. The helical transmembrane segment at 43-63 threads the bilayer; it reads ISNSPVLPILSYCASSILMTV. The Lumenal segment spans residues 64–71; it reads TNKYVLSG. A helical membrane pass occupies residues 72–92; it reads VQFNLNFFLLCVQSVVCIIAI. Residues 93–112 lie on the Cytoplasmic side of the membrane; the sequence is QTCKSMGLINYRDFNSDEAK. Residues 113 to 129 form a helical membrane-spanning segment; that stretch reads KWFPISLLLIGMIYTGT. At 130–136 the chain is on the lumenal side; the sequence is KALKFLS. Residues 137 to 153 traverse the membrane as a helical segment; sequence IPVYTIFKNLTIILIAY. At 154–162 the chain is on the cytoplasmic side; it reads GEVLWFGGS. Residues 163–184 traverse the membrane as a helical segment; the sequence is VTGMALFSFGLMVLSSVIAAWA. Over 185-206 the chain is Lumenal; sequence DIKHALDTSGFSGAEATSKIST. Residues 207–227 traverse the membrane as a helical segment; that stretch reads LNAGYIWMLINCLCTSTYILG. Topologically, residues 228–241 are cytoplasmic; it reads MRKRIKLTNFKDFD. The helical transmembrane segment at 242 to 262 threads the bilayer; the sequence is TMFYNNLLSIPILMIGSFIVE. Residues 263-280 are Lumenal-facing; it reads DWSSENINKNFPIETRNS. Residues 281 to 301 traverse the membrane as a helical segment; it reads LIFAMIFSGLSSVFISYTSAW. At 302 to 309 the chain is on the cytoplasmic side; it reads CVRVTSST. Residues 310–329 form a helical membrane-spanning segment; that stretch reads TYSMVGALNKLPIALSGLIF. Residues 330 to 332 lie on the Lumenal side of the membrane; that stretch reads FGD. The helical transmembrane segment at 333–355 threads the bilayer; sequence PVTVPSVSAIVVGFISGIVYSLA. Residues 356–387 are Cytoplasmic-facing; sequence KVKQNAKPRTGVLPTTNPVSASTQSMRDGLKS. Positions 366–387 are disordered; that stretch reads GVLPTTNPVSASTQSMRDGLKS. The segment covering 368–381 has biased composition (polar residues); that stretch reads LPTTNPVSASTQSM.

It belongs to the TPT transporter family. SLC35D subfamily. As to quaternary structure, homooligomer.

Its subcellular location is the golgi apparatus membrane. It localises to the cytoplasmic vesicle membrane. The protein localises to the endoplasmic reticulum membrane. Involved in the import of GDP-mannose from the cytoplasm into the Golgi lumen. The protein is GDP-mannose transporter (VRG4) of Coccidioides immitis (strain RS) (Valley fever fungus).